The sequence spans 289 residues: ATP synthase gamma chain (289 aa).

Belongs to the ATPase gamma chain family. In terms of assembly, F-type ATPases have 2 components, CF(1) - the catalytic core - and CF(0) - the membrane proton channel. CF(1) has five subunits: alpha(3), beta(3), gamma(1), delta(1), epsilon(1). CF(0) has three main subunits: a, b and c.

It is found in the cell inner membrane. Produces ATP from ADP in the presence of a proton gradient across the membrane. The gamma chain is believed to be important in regulating ATPase activity and the flow of protons through the CF(0) complex. In Cereibacter sphaeroides (strain ATCC 17023 / DSM 158 / JCM 6121 / CCUG 31486 / LMG 2827 / NBRC 12203 / NCIMB 8253 / ATH 2.4.1.) (Rhodobacter sphaeroides), this protein is ATP synthase gamma chain.